We begin with the raw amino-acid sequence, 292 residues long: Putative ribonuclease 3 (292 aa).

An RNase III domain is found at 32–158 (LGMSDEYIPY…FFGATEWLID (127 aa)). The 73-residue stretch at 204-276 (DAKTRFNEVI…ASRALETLAL (73 aa)) folds into the DRBM domain.

Belongs to the IIV-6 142R family.

It carries out the reaction Endonucleolytic cleavage to 5'-phosphomonoester.. In terms of biological role, digests double-stranded RNA. In Acheta domesticus (House cricket), this protein is Putative ribonuclease 3.